Reading from the N-terminus, the 167-residue chain is UPF0225 protein VV1358 (167 aa).

This sequence belongs to the UPF0225 family.

This chain is UPF0225 protein VV1358, found in Vibrio vulnificus (strain YJ016).